A 391-amino-acid polypeptide reads, in one-letter code: S-adenosylmethionine synthase (391 aa).

Residue His-19 participates in ATP binding. Asp-21 contributes to the Mg(2+) binding site. Glu-47 is a binding site for K(+). The L-methionine site is built by Glu-60 and Gln-103. The segment at 103-113 (QSPDIAQGVDR) is flexible loop. ATP contacts are provided by residues 168 to 170 (DGK), 236 to 237 (RF), Asp-245, 251 to 252 (RK), Ala-268, and Lys-272. Asp-245 contacts L-methionine. Position 276 (Lys-276) interacts with L-methionine.

This sequence belongs to the AdoMet synthase family. Homotetramer; dimer of dimers. Requires Mg(2+) as cofactor. The cofactor is K(+).

The protein resides in the cytoplasm. The enzyme catalyses L-methionine + ATP + H2O = S-adenosyl-L-methionine + phosphate + diphosphate. It functions in the pathway amino-acid biosynthesis; S-adenosyl-L-methionine biosynthesis; S-adenosyl-L-methionine from L-methionine: step 1/1. In terms of biological role, catalyzes the formation of S-adenosylmethionine (AdoMet) from methionine and ATP. The overall synthetic reaction is composed of two sequential steps, AdoMet formation and the subsequent tripolyphosphate hydrolysis which occurs prior to release of AdoMet from the enzyme. The protein is S-adenosylmethionine synthase of Oleidesulfovibrio alaskensis (strain ATCC BAA-1058 / DSM 17464 / G20) (Desulfovibrio alaskensis).